Reading from the N-terminus, the 91-residue chain is uncharacterized protein (91 aa).

An N-terminal signal peptide occupies residues 1 to 20 (MFSRVLALLAVLLLSANTWA).

It belongs to the BhsA/McbA family.

Its subcellular location is the periplasm. This is an uncharacterized protein from Escherichia coli O157:H7.